Reading from the N-terminus, the 485-residue chain is MKLKEILTSIQPVKITGNQDIEITGVDIDSRQVESGHLFMAMHGTQTDGHAYIPAAVEKGATAILCEELPAELAEGVTYIQVADSEDAVGKAATTFYGNPSSKLELVGVTGTNGKTTIATLLYNTFRYFGYKVGLISTVCNYIDDEAIPTEHTTPDPITLNRLLGRMADEGCKYVFMEVSSHSIAQKRISGLRFAGGIFTNLTRDHLDYHKTVENYLKAKKKFFDDMPKNSFSLTNLDDKNGLVMTQNTKSKVYTYSLRSLSDFKGRVLESHFEGMLLDFNNHELAVQFIGKFNASNLLAVFGAAVLLGKKEEDVLVALSTLHPVAGRFDAIRSPQGYTAIVDYAHTPDALVNVLNAIHGVLEGKGKVITVVGAGGNRDKGKRPIMAKEAARASDRVIITSDNPRFEEPQDIINDMLAGLDTEDKKKTLSIADRKEAIRTACMLAEKGDVILVAGKGHENYQDIKGVKHHFDDKEVLKEIFSLTV.

Serine 30 is a UDP-N-acetyl-alpha-D-muramoyl-L-alanyl-D-glutamate binding site. Residue 111 to 117 (GTNGKTT) coordinates ATP. UDP-N-acetyl-alpha-D-muramoyl-L-alanyl-D-glutamate contacts are provided by residues 153 to 154 (TT), serine 180, glutamine 186, and arginine 188. Residue lysine 220 is modified to N6-carboxylysine. Meso-2,6-diaminopimelate contacts are provided by residues arginine 378, 402-405 (DNPR), glycine 455, and glutamate 459. A Meso-diaminopimelate recognition motif motif is present at residues 402–405 (DNPR).

It belongs to the MurCDEF family. MurE subfamily. Requires Mg(2+) as cofactor. Post-translationally, carboxylation is probably crucial for Mg(2+) binding and, consequently, for the gamma-phosphate positioning of ATP.

The protein resides in the cytoplasm. The catalysed reaction is UDP-N-acetyl-alpha-D-muramoyl-L-alanyl-D-glutamate + meso-2,6-diaminopimelate + ATP = UDP-N-acetyl-alpha-D-muramoyl-L-alanyl-gamma-D-glutamyl-meso-2,6-diaminopimelate + ADP + phosphate + H(+). The protein operates within cell wall biogenesis; peptidoglycan biosynthesis. In terms of biological role, catalyzes the addition of meso-diaminopimelic acid to the nucleotide precursor UDP-N-acetylmuramoyl-L-alanyl-D-glutamate (UMAG) in the biosynthesis of bacterial cell-wall peptidoglycan. The polypeptide is UDP-N-acetylmuramoyl-L-alanyl-D-glutamate--2,6-diaminopimelate ligase (Bacteroides fragilis (strain ATCC 25285 / DSM 2151 / CCUG 4856 / JCM 11019 / LMG 10263 / NCTC 9343 / Onslow / VPI 2553 / EN-2)).